A 236-amino-acid chain; its full sequence is uncharacterized protein (236 aa).

A disordered region spans residues 1-29 (MNNEKNKQDRENLNRQDERKSSEIKSERK).

This is an uncharacterized protein from Staphylococcus aureus.